The chain runs to 438 residues: Probable phosphoglucosamine mutase (438 aa).

Ser-91 serves as the catalytic Phosphoserine intermediate. Residues Ser-91, Asp-228, Asp-230, and Asp-232 each coordinate Mg(2+). Ser-91 carries the post-translational modification Phosphoserine.

Belongs to the phosphohexose mutase family. Mg(2+) is required as a cofactor. In terms of processing, activated by phosphorylation.

The catalysed reaction is alpha-D-glucosamine 1-phosphate = D-glucosamine 6-phosphate. Catalyzes the conversion of glucosamine-6-phosphate to glucosamine-1-phosphate. This Methanocella arvoryzae (strain DSM 22066 / NBRC 105507 / MRE50) protein is Probable phosphoglucosamine mutase.